Reading from the N-terminus, the 75-residue chain is uncharacterized protein (75 aa).

The N-terminal stretch at 1–19 (MKKTAAIISACMLTFALSA) is a signal peptide. Cys20 is lipidated: N-palmitoyl cysteine. Cys20 carries S-diacylglycerol cysteine lipidation.

This sequence to E.coli YgdR.

Its subcellular location is the cell membrane. This is an uncharacterized protein from Escherichia coli O6:H1 (strain CFT073 / ATCC 700928 / UPEC).